The following is a 644-amino-acid chain: Exoribonuclease 2 (644 aa).

The RNB domain maps to 189–516 (REDLTALNFV…NHRLLKAIIT (328 aa)). The S1 motif domain maps to 561–643 (DTRFPAEIID…ETRNVVARPV (83 aa)).

This sequence belongs to the RNR ribonuclease family. RNase II subfamily.

The protein resides in the cytoplasm. The enzyme catalyses Exonucleolytic cleavage in the 3'- to 5'-direction to yield nucleoside 5'-phosphates.. Functionally, involved in mRNA degradation. Hydrolyzes single-stranded polyribonucleotides processively in the 3' to 5' direction. The sequence is that of Exoribonuclease 2 from Yersinia enterocolitica serotype O:8 / biotype 1B (strain NCTC 13174 / 8081).